A 218-amino-acid polypeptide reads, in one-letter code: Adenylate kinase (218 aa).

Position 10 to 15 (10 to 15) interacts with ATP; the sequence is GAGKGT. Residues 30–59 are NMP; that stretch reads STGDMIRETIKSGSVLGQELKKVLDAGELV. AMP is bound by residues T31, R36, 57–59, and Q92; that span reads ELV. The interval 122–159 is LID; it reads GRRIHPASGRTYHTKFNPPKVADKDDVTGEPLITRTDD. Residues R123 and 132–133 contribute to the ATP site; that span reads TY. Residues R156 and R167 each contribute to the AMP site. Q202 is an ATP binding site.

It belongs to the adenylate kinase family. Monomer.

The protein localises to the cytoplasm. The catalysed reaction is AMP + ATP = 2 ADP. Its pathway is purine metabolism; AMP biosynthesis via salvage pathway; AMP from ADP: step 1/1. Its function is as follows. Catalyzes the reversible transfer of the terminal phosphate group between ATP and AMP. Plays an important role in cellular energy homeostasis and in adenine nucleotide metabolism. The polypeptide is Adenylate kinase (Francisella tularensis subsp. holarctica (strain LVS)).